A 562-amino-acid chain; its full sequence is Nucleoprotein (562 aa).

Positions Leu-54–Ile-237 are binding site for the cap structure m7GTP. Residues Asp-381 and Glu-383 each coordinate Mn(2+). 4 residues coordinate Zn(2+): Glu-391, Cys-498, His-501, and Cys-523. Residue Asp-527 participates in Mn(2+) binding.

This sequence belongs to the arenaviridae nucleocapsid protein family. In terms of assembly, homomultimerizes to form the nucleocapsid. Binds to viral genomic RNA. Interacts with glycoprotein G2. Interacts with protein Z; this interaction probably directs the encapsidated genome to budding sites. Interacts with protein L; this interaction does not interfere with Z-L interaction. Interacts with host IKBKE (via Protein kinase domain); the interaction inhibits IKBKE kinase activity.

It is found in the virion. Its subcellular location is the host cytoplasm. Functionally, encapsidates the genome, protecting it from nucleases. The encapsidated genomic RNA is termed the nucleocapsid (NC). Serves as template for viral transcription and replication. The increased presence of protein N in host cell does not seem to trigger the switch from transcription to replication as observed in other negative strain RNA viruses. Through the interaction with host IKBKE, strongly inhibits the phosphorylation and nuclear translocation of host IRF3, a protein involved in interferon activation pathway, leading to the inhibition of interferon-beta and IRF3-dependent promoters activation. Also encodes a functional 3'-5' exoribonuclease that degrades preferentially dsRNA substrates and thereby participates in the suppression of interferon induction. The protein is Nucleoprotein of Homo sapiens (Human).